The sequence spans 275 residues: Autophagy-related protein 5 (275 aa).

Residue K129 forms a Glycyl lysine isopeptide (Lys-Gly) (interchain with G-Cter in lgg-3/ATG12) linkage. The segment covering L221–S231 has biased composition (low complexity). A disordered region spans residues L221–S241.

It belongs to the ATG5 family. Most likely a component of a complex at least containing atg-5, lgg-3/ATG12, atg-16.1 and/or atg-16.2. Interacts with lgg-3/ATG12. Interacts with atg-16.1 (via N-terminus) and atg-16.2 (via N-terminus). In terms of processing, conjugated to lgg-3/ATG12; which is essential for autophagy.

The protein localises to the preautophagosomal structure membrane. Its function is as follows. Involved in autophagic vesicle formation. Conjugation with lgg-3/ATG12, through a ubiquitin-like conjugating system involving atg-7 as an E1-like activating enzyme and atg-10 as an E2-like conjugating enzyme, is essential for its function. Most likely a component of an atg-5-lgg-3-atg-16 complex that promotes autophagosome formation by associating with lgg-2, but not lgg-1, at the preautophagosomal membrane. Probably, as part of an atg-5-lgg-3-atg-16 complex, required for lgg-1 lipidation; the complex acts as an E3-like enzyme promoting atg-3-mediated lgg-1 lipidation. Furthermore, association with atg-16.2 is required for the nucleation of lgg-1 positive autophagic vesicles. The protein is Autophagy-related protein 5 of Caenorhabditis elegans.